A 353-amino-acid polypeptide reads, in one-letter code: Feruloyl esterase B (353 aa).

Residues 1 to 18 (MAIPLVLVLAWLLPVVLA) form the signal peptide. The tract at residues 19 to 291 (ASLTQVNNFG…VSVVLDWFGI (273 aa)) is catalytic. S136 acts as the Charge relay system in catalysis. N179 and N246 each carry an N-linked (GlcNAc...) asparagine glycan. Residues 317 to 353 (CTAAHWAQCGGIGYSGCTACASPYTCQKANDYYSQCL) enclose the CBM1 domain.

The protein belongs to the carbohydrate esterase 1 (CE1) family. Feruloyl esterase type B subfamily. Post-translationally, glycosylated.

It is found in the secreted. It carries out the reaction feruloyl-polysaccharide + H2O = ferulate + polysaccharide.. Its activity is regulated as follows. Inhibited by the specific serine esterase inhibitor AEBSF. Involved in degradation of plant cell walls. Hydrolyzes the feruloyl-arabinose ester bond in arabinoxylans, and the feruloyl-galactose and feruloyl-arabinose ester bonds in pectin. Binds strongly to cellulose. The chain is Feruloyl esterase B (FAEB) from Talaromyces funiculosus (Fruitlet core rot fungus).